Consider the following 379-residue polypeptide: Cobalt-precorrin-5B C(1)-methyltransferase (379 aa).

The protein belongs to the CbiD family.

The catalysed reaction is Co-precorrin-5B + S-adenosyl-L-methionine = Co-precorrin-6A + S-adenosyl-L-homocysteine. It participates in cofactor biosynthesis; adenosylcobalamin biosynthesis; cob(II)yrinate a,c-diamide from sirohydrochlorin (anaerobic route): step 6/10. Functionally, catalyzes the methylation of C-1 in cobalt-precorrin-5B to form cobalt-precorrin-6A. In Salmonella typhimurium (strain LT2 / SGSC1412 / ATCC 700720), this protein is Cobalt-precorrin-5B C(1)-methyltransferase.